The sequence spans 408 residues: Sporulation integral membrane protein YlbJ (408 aa).

8 helical membrane passes run 6 to 26 (INTL…ISHP), 43 to 63 (VVFP…GFGI), 81 to 101 (VPGV…PAGA), 131 to 151 (LFIF…GILL), 214 to 234 (VTSS…FSVF), 294 to 314 (IIVS…VAGI), 324 to 344 (PFFI…MLLW), and 377 to 397 (LLVQ…IIIF).

It localises to the cell membrane. Its function is as follows. Required for spore cortex formation. The sequence is that of Sporulation integral membrane protein YlbJ (ylbJ) from Bacillus subtilis (strain 168).